A 62-amino-acid polypeptide reads, in one-letter code: Large ribosomal subunit protein bL35 (62 aa).

The segment at 31 to 62 (HLAQNKTTKQKRQSRKSAQMHSSDLKRFKALI) is disordered. Positions 53 to 62 (SDLKRFKALI) are enriched in basic and acidic residues.

Belongs to the bacterial ribosomal protein bL35 family.

This chain is Large ribosomal subunit protein bL35, found in Mycoplasmopsis agalactiae (strain NCTC 10123 / CIP 59.7 / PG2) (Mycoplasma agalactiae).